A 501-amino-acid polypeptide reads, in one-letter code: Aspartyl/glutamyl-tRNA(Asn/Gln) amidotransferase subunit B (501 aa).

The interval 271-299 is disordered; that stretch reads VQETRHYQETDGSTSKGRPKETAEDYRYF. Basic and acidic residues predominate over residues 288–299; it reads RPKETAEDYRYF.

The protein belongs to the GatB/GatE family. GatB subfamily. As to quaternary structure, heterotrimer of A, B and C subunits.

It catalyses the reaction L-glutamyl-tRNA(Gln) + L-glutamine + ATP + H2O = L-glutaminyl-tRNA(Gln) + L-glutamate + ADP + phosphate + H(+). It carries out the reaction L-aspartyl-tRNA(Asn) + L-glutamine + ATP + H2O = L-asparaginyl-tRNA(Asn) + L-glutamate + ADP + phosphate + 2 H(+). In terms of biological role, allows the formation of correctly charged Asn-tRNA(Asn) or Gln-tRNA(Gln) through the transamidation of misacylated Asp-tRNA(Asn) or Glu-tRNA(Gln) in organisms which lack either or both of asparaginyl-tRNA or glutaminyl-tRNA synthetases. The reaction takes place in the presence of glutamine and ATP through an activated phospho-Asp-tRNA(Asn) or phospho-Glu-tRNA(Gln). The chain is Aspartyl/glutamyl-tRNA(Asn/Gln) amidotransferase subunit B from Corynebacterium diphtheriae (strain ATCC 700971 / NCTC 13129 / Biotype gravis).